We begin with the raw amino-acid sequence, 232 residues long: Octanoyltransferase (232 aa).

A BPL/LPL catalytic domain is found at 43-231 (DQTPNYFLFV…HFTQLFDCTV (189 aa)). Substrate-binding positions include 88 to 95 (RGGDITYH), 160 to 162 (ALG), and 173 to 175 (GFA). Cys191 acts as the Acyl-thioester intermediate in catalysis.

This sequence belongs to the LipB family.

It localises to the cytoplasm. It carries out the reaction octanoyl-[ACP] + L-lysyl-[protein] = N(6)-octanoyl-L-lysyl-[protein] + holo-[ACP] + H(+). Its pathway is protein modification; protein lipoylation via endogenous pathway; protein N(6)-(lipoyl)lysine from octanoyl-[acyl-carrier-protein]: step 1/2. Its function is as follows. Catalyzes the transfer of endogenously produced octanoic acid from octanoyl-acyl-carrier-protein onto the lipoyl domains of lipoate-dependent enzymes. Lipoyl-ACP can also act as a substrate although octanoyl-ACP is likely to be the physiological substrate. This is Octanoyltransferase from Flavobacterium psychrophilum (strain ATCC 49511 / DSM 21280 / CIP 103535 / JIP02/86).